A 148-amino-acid polypeptide reads, in one-letter code: Macrodomain Ter protein (148 aa).

It belongs to the MatP family. As to quaternary structure, homodimer.

The protein localises to the cytoplasm. In terms of biological role, required for spatial organization of the terminus region of the chromosome (Ter macrodomain) during the cell cycle. Prevents early segregation of duplicated Ter macrodomains during cell division. Binds specifically to matS, which is a 13 bp signature motif repeated within the Ter macrodomain. The polypeptide is Macrodomain Ter protein (Haemophilus influenzae (strain ATCC 51907 / DSM 11121 / KW20 / Rd)).